A 437-amino-acid polypeptide reads, in one-letter code: Perilipin-2 (437 aa).

Residue alanine 2 is modified to N-acetylalanine. At serine 215 the chain carries Phosphoserine. Tyrosine 232 bears the Phosphotyrosine mark. A disordered region spans residues 412–437 (SQNAQDQGAEMDKSSQETQRSEHKTH). The span at 421–437 (EMDKSSQETQRSEHKTH) shows a compositional bias: basic and acidic residues.

Belongs to the perilipin family. As to quaternary structure, interacts with IRGC. Post-translationally, acylated; primarily with C14, C16 and C18 fatty acids. Phosphorylation at Tyr-232 by isoform 1 of CHKA (CHKalpha2) promotes dissociation from lipid droplets: dissociation is followed by recruitment of autophagosome machinery to lipid droplets and subsequent lipid droplet lipolysis. In terms of processing, polyubiquitination of Nt-acetylatable A-PLIN2 by MARCHF6 lead to degradation by 26S proteasomes. As to expression, milk lipid globules.

It localises to the membrane. The protein localises to the lipid droplet. In terms of biological role, structural component of lipid droplets, which is required for the formation and maintenance of lipid storage droplets. The sequence is that of Perilipin-2 from Homo sapiens (Human).